A 426-amino-acid chain; its full sequence is Glutamyl-tRNA(Gln) amidotransferase subunit D (426 aa).

One can recognise an Asparaginase/glutaminase domain in the interval 82–413 (KNISILSTGG…KDAKKLICKN (332 aa)). Catalysis depends on residues Thr-92, Thr-168, Asp-169, and Lys-245.

This sequence belongs to the asparaginase 1 family. GatD subfamily. As to quaternary structure, heterodimer of GatD and GatE.

The enzyme catalyses L-glutamyl-tRNA(Gln) + L-glutamine + ATP + H2O = L-glutaminyl-tRNA(Gln) + L-glutamate + ADP + phosphate + H(+). In terms of biological role, allows the formation of correctly charged Gln-tRNA(Gln) through the transamidation of misacylated Glu-tRNA(Gln) in organisms which lack glutaminyl-tRNA synthetase. The reaction takes place in the presence of glutamine and ATP through an activated gamma-phospho-Glu-tRNA(Gln). The GatDE system is specific for glutamate and does not act on aspartate. This is Glutamyl-tRNA(Gln) amidotransferase subunit D from Methanococcus vannielii (strain ATCC 35089 / DSM 1224 / JCM 13029 / OCM 148 / SB).